We begin with the raw amino-acid sequence, 347 residues long: L-threonine 3-dehydrogenase (347 aa).

A Zn(2+)-binding site is contributed by cysteine 42. Active-site charge relay system residues include threonine 44 and histidine 47. The Zn(2+) site is built by histidine 67, glutamate 68, cysteine 97, cysteine 100, cysteine 103, and cysteine 111. NAD(+) is bound by residues isoleucine 180, aspartate 200, arginine 205, 267–269 (LSL), and 292–293 (IT).

The protein belongs to the zinc-containing alcohol dehydrogenase family. As to quaternary structure, homotetramer. It depends on Zn(2+) as a cofactor.

It is found in the cytoplasm. The catalysed reaction is L-threonine + NAD(+) = (2S)-2-amino-3-oxobutanoate + NADH + H(+). The protein operates within amino-acid degradation; L-threonine degradation via oxydo-reductase pathway; glycine from L-threonine: step 1/2. In terms of biological role, catalyzes the NAD(+)-dependent oxidation of L-threonine to 2-amino-3-ketobutyrate. The polypeptide is L-threonine 3-dehydrogenase (Bacillus velezensis (strain DSM 23117 / BGSC 10A6 / LMG 26770 / FZB42) (Bacillus amyloliquefaciens subsp. plantarum)).